We begin with the raw amino-acid sequence, 127 residues long: Nitrogenase-stabilizing/protective protein NifW (127 aa).

This sequence belongs to the NifW family. Homotrimer; associates with NifD.

Its function is as follows. May protect the nitrogenase Fe-Mo protein from oxidative damage. In Rhizobium etli (strain ATCC 51251 / DSM 11541 / JCM 21823 / NBRC 15573 / CFN 42), this protein is Nitrogenase-stabilizing/protective protein NifW.